Here is a 2381-residue protein sequence, read N- to C-terminus: Myb-like protein U (2381 aa).

4 disordered regions span residues Met1 to Asn85, Ser148 to Ser167, Pro178 to Asn492, and Asn641 to Met696. Low complexity-rich tracts occupy residues Ser30–Ser41 and Thr64–Thr79. Low complexity-rich tracts occupy residues Asn192–Ser204, Glu225–Ser261, and Ser291–Lys315. The span at Ser331–Leu343 shows a compositional bias: acidic residues. Low complexity predominate over residues Thr363–Ser405. Residues Ser421–Lys430 show a composition bias toward polar residues. 2 stretches are compositionally biased toward low complexity: residues Gln435–Asn492 and Asn641–Asn692. Residues Trp856–Arg899 form the Myb-like domain. Disordered regions lie at residues Lys932–Pro1024, Ile1068–Pro1093, Thr1145–Glu1207, Ser1295–Asp1339, Pro1422–Pro1474, Pro1597–Val1647, Pro1667–Val1849, Thr1961–Ala1985, Thr2055–Thr2106, and Leu2122–Asp2280. Over residues Asn936 to Gly953 the composition is skewed to low complexity. Residues Val982–Arg995 are compositionally biased toward basic residues. A compositionally biased stretch (polar residues) spans Ala1000–Pro1013. 4 stretches are compositionally biased toward low complexity: residues Asn1069–Asn1092, Thr1145–Ala1186, Val1195–Asn1205, and Thr1306–Gln1325. Positions Leu1326–Pro1337 are enriched in pro residues. Residues Pro1427–Pro1474 show a composition bias toward low complexity. Residues Pro1597 to Pro1606 show a composition bias toward pro residues. The segment covering Ser1618–Ser1637 has biased composition (low complexity). Polar residues-rich tracts occupy residues Thr1638–Val1647 and Gln1671–Leu1701. 2 stretches are compositionally biased toward low complexity: residues Pro1702 to Ser1735 and Thr1743 to Pro1809. Residues Ala1829 to Thr1844 show a composition bias toward polar residues. Low complexity-rich tracts occupy residues Thr1961–Thr1970 and Asn2065–Thr2097. Residues Asn2129–Pro2138 show a composition bias toward polar residues. The span at Pro2154–Pro2209 shows a compositional bias: low complexity. Basic and acidic residues predominate over residues Lys2210–Lys2278.

The chain is Myb-like protein U (mybU) from Dictyostelium discoideum (Social amoeba).